Reading from the N-terminus, the 259-residue chain is Hydroxyethylthiazole kinase (259 aa).

Met50 lines the substrate pocket. Residues Arg122 and Thr168 each contribute to the ATP site. Gly195 contacts substrate.

The protein belongs to the Thz kinase family. Mg(2+) is required as a cofactor.

It carries out the reaction 5-(2-hydroxyethyl)-4-methylthiazole + ATP = 4-methyl-5-(2-phosphooxyethyl)-thiazole + ADP + H(+). The protein operates within cofactor biosynthesis; thiamine diphosphate biosynthesis; 4-methyl-5-(2-phosphoethyl)-thiazole from 5-(2-hydroxyethyl)-4-methylthiazole: step 1/1. Its function is as follows. Catalyzes the phosphorylation of the hydroxyl group of 4-methyl-5-beta-hydroxyethylthiazole (THZ). This Escherichia coli O127:H6 (strain E2348/69 / EPEC) protein is Hydroxyethylthiazole kinase.